The following is a 167-amino-acid chain: Large ribosomal subunit protein uL10 (167 aa).

It belongs to the universal ribosomal protein uL10 family. As to quaternary structure, part of the ribosomal stalk of the 50S ribosomal subunit. The N-terminus interacts with L11 and the large rRNA to form the base of the stalk. The C-terminus forms an elongated spine to which L12 dimers bind in a sequential fashion forming a multimeric L10(L12)X complex.

In terms of biological role, forms part of the ribosomal stalk, playing a central role in the interaction of the ribosome with GTP-bound translation factors. This Ligilactobacillus salivarius (strain UCC118) (Lactobacillus salivarius) protein is Large ribosomal subunit protein uL10.